A 220-amino-acid chain; its full sequence is Ribonuclease HII (220 aa).

The RNase H type-2 domain occupies 32–220 (KHIAGIDEAG…FAPIKGCFDC (189 aa)). Residues aspartate 38, glutamate 39, and aspartate 130 each contribute to the a divalent metal cation site.

It belongs to the RNase HII family. Mn(2+) serves as cofactor. Mg(2+) is required as a cofactor.

The protein resides in the cytoplasm. It carries out the reaction Endonucleolytic cleavage to 5'-phosphomonoester.. Functionally, endonuclease that specifically degrades the RNA of RNA-DNA hybrids. The protein is Ribonuclease HII of Brucella abortus (strain 2308).